The sequence spans 184 residues: Large ribosomal subunit protein bL9 (184 aa).

The interval 160-184 is disordered; the sequence is LQNQKSEQQEAEQDANKEAADGDDS. Residues 173–184 show a composition bias toward basic and acidic residues; the sequence is DANKEAADGDDS.

This sequence belongs to the bacterial ribosomal protein bL9 family.

In terms of biological role, binds to the 23S rRNA. The sequence is that of Large ribosomal subunit protein bL9 from Wolbachia sp. subsp. Drosophila simulans (strain wRi).